The sequence spans 279 residues: ATP synthase gamma chain (279 aa).

It belongs to the ATPase gamma chain family. F-type ATPases have 2 components, CF(1) - the catalytic core - and CF(0) - the membrane proton channel. CF(1) has five subunits: alpha(3), beta(3), gamma(1), delta(1), epsilon(1). CF(0) has three main subunits: a, b and c.

The protein resides in the cell membrane. Functionally, produces ATP from ADP in the presence of a proton gradient across the membrane. The gamma chain is believed to be important in regulating ATPase activity and the flow of protons through the CF(0) complex. The sequence is that of ATP synthase gamma chain from Mycoplasmopsis pulmonis (strain UAB CTIP) (Mycoplasma pulmonis).